Here is a 223-residue protein sequence, read N- to C-terminus: Protein disulfide-isomerase-like protein EhSep2 (223 aa).

The first 17 residues, 1 to 17 (MALRSLTLLCAAAGASA), serve as a signal peptide directing secretion. Residues 18 to 125 (GAIELTPDNF…DELKKFAENE (108 aa)) enclose the Thioredoxin domain. Selenocysteine 47 is a non-standard amino acid (selenocysteine). Positions 155–201 (EKRTEMLETLKKELADAESTHEALLKELQATYKESMDKLEKLKEESA) form a coiled coil. The tract at residues 201-223 (APKIKLLKAATPAPKAEGAKDEV) is disordered. Positions 203 to 216 (KIKLLKAATPAPKA) are enriched in low complexity. The short motif at 220-223 (KDEV) is the Prevents secretion from ER element.

The protein belongs to the protein disulfide isomerase family.

It is found in the endoplasmic reticulum lumen. The chain is Protein disulfide-isomerase-like protein EhSep2 (SEP2) from Emiliania huxleyi (Coccolithophore).